We begin with the raw amino-acid sequence, 529 residues long: Peptide chain release factor 3 (529 aa).

Residues serine 11–isoleucine 280 form the tr-type G domain. GTP is bound by residues serine 20–threonine 27, aspartate 88–histidine 92, and asparagine 142–aspartate 145.

The protein belongs to the TRAFAC class translation factor GTPase superfamily. Classic translation factor GTPase family. PrfC subfamily.

The protein localises to the cytoplasm. Functionally, increases the formation of ribosomal termination complexes and stimulates activities of RF-1 and RF-2. It binds guanine nucleotides and has strong preference for UGA stop codons. It may interact directly with the ribosome. The stimulation of RF-1 and RF-2 is significantly reduced by GTP and GDP, but not by GMP. The polypeptide is Peptide chain release factor 3 (Buchnera aphidicola subsp. Schizaphis graminum (strain Sg)).